Reading from the N-terminus, the 150-residue chain is Large ribosomal subunit protein bL9 (150 aa).

The protein belongs to the bacterial ribosomal protein bL9 family.

Functionally, binds to the 23S rRNA. This chain is Large ribosomal subunit protein bL9, found in Neisseria gonorrhoeae (strain ATCC 700825 / FA 1090).